The sequence spans 409 residues: Histidine--tRNA ligase (409 aa).

Belongs to the class-II aminoacyl-tRNA synthetase family. As to quaternary structure, homodimer.

The protein resides in the cytoplasm. The catalysed reaction is tRNA(His) + L-histidine + ATP = L-histidyl-tRNA(His) + AMP + diphosphate + H(+). The chain is Histidine--tRNA ligase from Campylobacter fetus subsp. fetus (strain 82-40).